The following is a 122-amino-acid chain: UPF0231 protein VF_2154 (122 aa).

It belongs to the UPF0231 family.

The polypeptide is UPF0231 protein VF_2154 (Aliivibrio fischeri (strain ATCC 700601 / ES114) (Vibrio fischeri)).